Here is a 226-residue protein sequence, read N- to C-terminus: Cytidylate kinase (226 aa).

Residue 10–18 (GPASSGKST) participates in ATP binding.

Belongs to the cytidylate kinase family. Type 1 subfamily.

The protein localises to the cytoplasm. It catalyses the reaction CMP + ATP = CDP + ADP. The enzyme catalyses dCMP + ATP = dCDP + ADP. This is Cytidylate kinase from Streptococcus thermophilus (strain CNRZ 1066).